The primary structure comprises 80 residues: Large ribosomal subunit protein eL20 (80 aa).

The protein belongs to the eukaryotic ribosomal protein eL20 family. In terms of assembly, part of the 50S ribosomal subunit. Binds 23S rRNA.

This Methanopyrus kandleri (strain AV19 / DSM 6324 / JCM 9639 / NBRC 100938) protein is Large ribosomal subunit protein eL20.